The primary structure comprises 342 residues: DNA repair protein RAD51 homolog 1 (342 aa).

The disordered stretch occupies residues 1–24 (MTTMEQRRNQNAVQQQDDEETQHG). Positions 51–80 (TVEGVAYTPRKDLLQIKGISDAKVDKIVEA) constitute a HhH domain. The FtsK domain maps to 100 to 314 (QEIIQITSGS…LRKGRAEERI (215 aa)). An ATP-binding site is contributed by 130 to 137 (GEFRSGKT).

It belongs to the RecA family. RAD51 subfamily. Self-associates and interacts with XRCC3. Binds to RAD54/CHR25. Interacts with BRCA2A and BRCA2B. Can form a tripartite complex with both BRCA2B and DSS1(I). Detected in various tissues. Higher expression in reproductive tissues than in vegetative tissues, with the highest expression level in young flower buds. At cellular level, is expressed at low levels in flower primordia, then at higher levels in young anthers and at highest levels in both females and males meiocytes. Not detected in gametophytes.

It is found in the nucleus. Functionally, binds to single and double-stranded DNA and exhibits DNA-dependent ATPase activity. Unwinds duplex DNA. Component of the meiotic recombination pathway. Seems to play a role in mediating chromosome homology search, chromosome pairing and synapsis at early stages and probably chromosome crossing-over at later stages in meiosis. Probably is involved in the repair of meiotic double strand breaks (DBSs) generated by AtSPO11-1 and in homologous recombination. Its function is dispensable for vegetative growth and root mitosis. This Arabidopsis thaliana (Mouse-ear cress) protein is DNA repair protein RAD51 homolog 1.